The following is a 747-amino-acid chain: MRRSLAPSQLARRKPEDRSSDDEDWQPGTVTPKKRKSSSETQVQECFLSPFRKPLTQLLNRPPCLDSSQHEAFIRSILSKPFKVPIPNYQGPLGSRALGLKRAGVRRALHDPLEEGALVLYEPPPLSAHDQLKLDKEKLPVHVVVDPILSKVLRPHQREGVKFLWECVTSRRIPGSHGCIMADEMGLGKTLQCITLMWTLLRQSPECKPEIEKAVVVSPSSLVKNWYNEVEKWLGGRIQPLAIDGGSKDEIDRKLEGFMNQRGARVPSPILIISYETFRLHVGVLKKGNVGLVICDEGHRLKNSENQTYQALDSLNTSRRVLISGTPIQNDLLEYFSLVHFVNSGILGTAHEFKKHFELPILKSRDAAASEADRQRGEERLRELIGIVNRCLIRRTSDILSKYLPVKIEQVVCCRLTPLQTELYKRFLRQAKPEEELREGKMSVSSLSSITSLKKLCNHPALIYDKCVAEEDGFEGTLGIFPPGYNSKAVEPQLSGKMLVLDYILAVTRSRSSDKVVLVSNYTQTLDLFEKLCRVRRYLYVRLDGTMSIKKRAKVVERFNSPSSPDFVFMLSSKAGGCGLNLIGANRLVMFDPDWNPANDEQAMARVWRDGQKKICYIYRLLSAGTIEEKIFQRQSHKKALSSCVVDEEQDVERHFSLGELKELFTLDEASLSDTHDRLHCRRCVNNRQVWPPPDGSDCTSDLAQWNHSTDKRGLQDEVLQAAWDASSTAITFVFHQRSHEEQRGLH.

The interval 1–42 (MRRSLAPSQLARRKPEDRSSDDEDWQPGTVTPKKRKSSSETQ) is disordered. The required for chromatin remodeling, strand pairing activities and coupling of ATPase activity stretch occupies residues 2–9 (RRSLAPSQ). Ser38 carries the post-translational modification Phosphoserine. Residues 170-345 (SRRIPGSHGC…FSLVHFVNSG (176 aa)) enclose the Helicase ATP-binding domain. 183–190 (DEMGLGKT) is a binding site for ATP. The DEGH box motif lies at 296 to 299 (DEGH). The Helicase C-terminal domain maps to 500-653 (VLDYILAVTR…CVVDEEQDVE (154 aa)). Lys515 carries the N6-acetyllysine modification. A Phosphoserine; by NEK1 modification is found at Ser572.

This sequence belongs to the SNF2/RAD54 helicase family. Homohexamer. Interacts (via N-terminus) with RAD51. Interacts with NAP1L1. Interacts with BRD9; this interaction orchestrates RAD51-RAD54 complex formation. Acetylated. Acetylation promotes interaction with BRD9, and subsequently with RAD54, which is essential for homologous recombination (HR). In terms of processing, phosphorylated. Phosphorylation at Ser-572 by NEK1 specifically in G2 phase allows efficient removal of RAD51 filaments from DNA. In terms of tissue distribution, hardly detectable in most tissues. Dramatically increased in thymus, spleen and testis.

Its subcellular location is the nucleus. The catalysed reaction is ATP + H2O = ADP + phosphate + H(+). Its function is as follows. Plays an essential role in homologous recombination (HR) which is a major pathway for repairing DNA double-strand breaks (DSBs), single-stranded DNA (ssDNA) gaps, and stalled or collapsed replication forks. Acts as a molecular motor during the homology search and guides RAD51 ssDNA along a donor dsDNA thereby changing the homology search from the diffusion-based mechanism to a motor-guided mechanism. Plays also an essential role in RAD51-mediated synaptic complex formation which consists of three strands encased in a protein filament formed once homology is recognized. Once DNA strand exchange occured, dissociates RAD51 from nucleoprotein filaments formed on dsDNA. Deficiency also resulted in an increased frequency of end-to-end chromosome fusions involving telomeres compared to the controls, suggesting a putative role in telomere capping. Non-homologous end joining (NHEJ) and homologous recombination (HR) represent the two major pathways of DNA double-strand break (DSB) repair in eukaryotic cells. LIG4 and RAD54L cooperate to support cellular proliferation, repair spontaneous DSBs, and prevent chromosome and single chromatid aberrations. In Mus musculus (Mouse), this protein is DNA repair and recombination protein RAD54-like (Rad54l).